Reading from the N-terminus, the 953-residue chain is Isoleucine--tRNA ligase (953 aa).

The 'HIGH' region signature appears at 57–67 (PYANGDIHIGH). Position 582 (glutamate 582) interacts with L-isoleucyl-5'-AMP. Positions 623 to 627 (KMSKS) match the 'KMSKS' region motif. Lysine 626 serves as a coordination point for ATP. Zn(2+)-binding residues include cysteine 916, cysteine 919, cysteine 936, and cysteine 939.

It belongs to the class-I aminoacyl-tRNA synthetase family. IleS type 1 subfamily. In terms of assembly, monomer. The cofactor is Zn(2+).

It is found in the cytoplasm. The catalysed reaction is tRNA(Ile) + L-isoleucine + ATP = L-isoleucyl-tRNA(Ile) + AMP + diphosphate. Its function is as follows. Catalyzes the attachment of isoleucine to tRNA(Ile). As IleRS can inadvertently accommodate and process structurally similar amino acids such as valine, to avoid such errors it has two additional distinct tRNA(Ile)-dependent editing activities. One activity is designated as 'pretransfer' editing and involves the hydrolysis of activated Val-AMP. The other activity is designated 'posttransfer' editing and involves deacylation of mischarged Val-tRNA(Ile). In Bordetella pertussis (strain Tohama I / ATCC BAA-589 / NCTC 13251), this protein is Isoleucine--tRNA ligase.